Reading from the N-terminus, the 1190-residue chain is DNA-directed RNA polymerase subunit beta (1190 aa).

It belongs to the RNA polymerase beta chain family. In terms of assembly, the RNAP catalytic core consists of 2 alpha, 1 beta, 1 beta' and 1 omega subunit. When a sigma factor is associated with the core the holoenzyme is formed, which can initiate transcription.

The enzyme catalyses RNA(n) + a ribonucleoside 5'-triphosphate = RNA(n+1) + diphosphate. In terms of biological role, DNA-dependent RNA polymerase catalyzes the transcription of DNA into RNA using the four ribonucleoside triphosphates as substrates. This is DNA-directed RNA polymerase subunit beta from Geobacillus thermodenitrificans (strain NG80-2).